The following is a 530-amino-acid chain: Bifunctional purine biosynthesis protein PurH (530 aa).

Positions 1–147 constitute an MGS-like domain; the sequence is MPSIKRALIS…KNWKHVAIVT (147 aa).

The protein belongs to the PurH family.

The enzyme catalyses (6R)-10-formyltetrahydrofolate + 5-amino-1-(5-phospho-beta-D-ribosyl)imidazole-4-carboxamide = 5-formamido-1-(5-phospho-D-ribosyl)imidazole-4-carboxamide + (6S)-5,6,7,8-tetrahydrofolate. The catalysed reaction is IMP + H2O = 5-formamido-1-(5-phospho-D-ribosyl)imidazole-4-carboxamide. Its pathway is purine metabolism; IMP biosynthesis via de novo pathway; 5-formamido-1-(5-phospho-D-ribosyl)imidazole-4-carboxamide from 5-amino-1-(5-phospho-D-ribosyl)imidazole-4-carboxamide (10-formyl THF route): step 1/1. It participates in purine metabolism; IMP biosynthesis via de novo pathway; IMP from 5-formamido-1-(5-phospho-D-ribosyl)imidazole-4-carboxamide: step 1/1. This Neisseria meningitidis serogroup A / serotype 4A (strain DSM 15465 / Z2491) protein is Bifunctional purine biosynthesis protein PurH.